Here is a 159-residue protein sequence, read N- to C-terminus: Keratin-associated protein 9-8 (159 aa).

A run of 15 repeats spans residues 8–12 (CCQPT), 13–17 (CCRTT), 32–36 (CCQPS), 37–41 (CCVSS), 46–50 (CCRPT), 51–55 (CCQNT), 56–60 (CCQPI), 65–69 (CCQPS), 70–74 (CCSTP), 75–79 (CCQPT), 80–84 (CCGQT), 129–133 (CCRPA), 134–138 (CCETT), 139–142 (CCRT), and 153–157 (CCQPS). Residues 8–157 (CCQPTCCRTT…TCVSSCCQPS (150 aa)) are 15 X 5 AA repeats of C-C-[RQVSGE]-[SPSNQ]-[TASPI].

This sequence belongs to the KRTAP type 9 family. Interacts with hair keratins.

Its function is as follows. In the hair cortex, hair keratin intermediate filaments are embedded in an interfilamentous matrix, consisting of hair keratin-associated proteins (KRTAP), which are essential for the formation of a rigid and resistant hair shaft through their extensive disulfide bond cross-linking with abundant cysteine residues of hair keratins. The matrix proteins include the high-sulfur and high-glycine-tyrosine keratins. The protein is Keratin-associated protein 9-8 (KRTAP9-8) of Homo sapiens (Human).